The primary structure comprises 260 residues: Global transcriptional regulator CodY (260 aa).

Residues 1 to 159 (MPNLLEKTRK…SSTVVGIQLL (159 aa)) form a GAF domain region. Residues 207–226 (ASVIADRIGITRSVIVNALR) constitute a DNA-binding region (H-T-H motif).

The protein belongs to the CodY family.

It localises to the cytoplasm. In terms of biological role, DNA-binding global transcriptional regulator which is involved in the adaptive response to starvation and acts by directly or indirectly controlling the expression of numerous genes in response to nutrient availability. During rapid exponential growth, CodY is highly active and represses genes whose products allow adaptation to nutrient depletion. The protein is Global transcriptional regulator CodY of Streptococcus uberis (strain ATCC BAA-854 / 0140J).